Reading from the N-terminus, the 1279-residue chain is ATP-dependent helicase/nuclease subunit A (1279 aa).

Positions 4–499 (TKWTDEQRQA…VKLFKNFRSR (496 aa)) constitute a UvrD-like helicase ATP-binding domain. 25-32 (AGAGAGKT) serves as a coordination point for ATP. The UvrD-like helicase C-terminal domain maps to 526 to 853 (EEALKVGASY…RIMSIHKSKG (328 aa)).

The protein belongs to the helicase family. AddA subfamily. Heterodimer of AddA and AddB/RexB. Requires Mg(2+) as cofactor.

The enzyme catalyses Couples ATP hydrolysis with the unwinding of duplex DNA by translocating in the 3'-5' direction.. It carries out the reaction ATP + H2O = ADP + phosphate + H(+). Functionally, the heterodimer acts as both an ATP-dependent DNA helicase and an ATP-dependent, dual-direction single-stranded exonuclease. Recognizes the chi site generating a DNA molecule suitable for the initiation of homologous recombination. The AddA nuclease domain is required for chi fragment generation; this subunit has the helicase and 3' -&gt; 5' nuclease activities. The chain is ATP-dependent helicase/nuclease subunit A from Clostridium botulinum (strain Okra / Type B1).